The following is a 266-amino-acid chain: Interleukin-1 beta (266 aa).

The propeptide occupies 1–113 (MATVPEPINE…ETSSDEFLCD (113 aa)).

The protein belongs to the IL-1 family. In terms of assembly, monomer. In its precursor form, weakly interacts with full-length MEFV; the mature cytokine does not interact at all. Interacts with integrins ITGAV:ITGBV and ITGA5:ITGB1; integrin-binding is required for IL1B signaling. Interacts with cargo receptor TMED10; the interaction is direct and is required for the secretion of IL1B mature form. Interacts with HSP90AB1; the interaction facilitates cargo translocation into the ERGIC. Interacts with HSP90B1; the interaction facilitates cargo translocation into the ERGIC.

It localises to the cytoplasm. Its subcellular location is the cytosol. The protein resides in the secreted. The protein localises to the lysosome. It is found in the extracellular exosome. Potent pro-inflammatory cytokine. Initially discovered as the major endogenous pyrogen, induces prostaglandin synthesis, neutrophil influx and activation, T-cell activation and cytokine production, B-cell activation and antibody production, and fibroblast proliferation and collagen production. Promotes Th17 differentiation of T-cells. Synergizes with IL12/interleukin-12 to induce IFNG synthesis from T-helper 1 (Th1) cells. Plays a role in angiogenesis by inducing VEGF production synergistically with TNF and IL6. Involved in transduction of inflammation downstream of pyroptosis: its mature form is specifically released in the extracellular milieu by passing through the gasdermin-D (GSDMD) pore. This is Interleukin-1 beta (IL1B) from Bubalus carabanensis (Swamp type water buffalo).